Consider the following 337-residue polypeptide: Pantothenate synthetase (337 aa).

Residue 31–38 (MGALHEGH) participates in ATP binding. H38 (proton donor) is an active-site residue. Q65 is a binding site for (R)-pantoate. Beta-alanine is bound at residue Q65. ATP is bound at residue 152-155 (GQKD). Q158 lines the (R)-pantoate pocket. Residues V181 and 189 to 192 (LSSR) contribute to the ATP site.

The protein belongs to the pantothenate synthetase family. In terms of assembly, homodimer.

Its subcellular location is the cytoplasm. It carries out the reaction (R)-pantoate + beta-alanine + ATP = (R)-pantothenate + AMP + diphosphate + H(+). It functions in the pathway cofactor biosynthesis; (R)-pantothenate biosynthesis; (R)-pantothenate from (R)-pantoate and beta-alanine: step 1/1. In terms of biological role, catalyzes the condensation of pantoate with beta-alanine in an ATP-dependent reaction via a pantoyl-adenylate intermediate. This Streptomyces coelicolor (strain ATCC BAA-471 / A3(2) / M145) protein is Pantothenate synthetase.